A 311-amino-acid polypeptide reads, in one-letter code: Malate dehydrogenase (311 aa).

NAD(+) is bound by residues 7 to 13 (GAAGGIG) and Asp-34. The substrate site is built by Arg-81 and Arg-87. Residues Asn-94 and 117 to 119 (ITN) contribute to the NAD(+) site. The substrate site is built by Asn-119 and Arg-153. His-177 acts as the Proton acceptor in catalysis. Residue Met-227 participates in NAD(+) binding.

The protein belongs to the LDH/MDH superfamily. MDH type 1 family. Homodimer.

It catalyses the reaction (S)-malate + NAD(+) = oxaloacetate + NADH + H(+). Catalyzes the reversible oxidation of malate to oxaloacetate. This Aliivibrio fischeri (strain ATCC 700601 / ES114) (Vibrio fischeri) protein is Malate dehydrogenase.